A 984-amino-acid chain; its full sequence is Putative formate dehydrogenase SAR2393 (984 aa).

Residues 3 to 79 (EHLVVTLDGK…PMTVNTVNND (77 aa)) form the 2Fe-2S ferredoxin-type domain. Residues cysteine 37, cysteine 48, cysteine 51, and cysteine 63 each contribute to the [2Fe-2S] cluster site. Residues 79–119 (DVKDAQKEALDRILEKHMLYCTVCDYNNGDCEIHNTMDAWG) form the 4Fe-4S His(Cys)3-ligated-type domain. [4Fe-4S] cluster is bound by residues histidine 95, cysteine 99, cysteine 102, cysteine 109, cysteine 147, cysteine 150, cysteine 153, cysteine 157, cysteine 190, cysteine 193, cysteine 196, cysteine 200, cysteine 264, cysteine 267, cysteine 271, and cysteine 299. 2 consecutive 4Fe-4S ferredoxin-type domains span residues 138–165 (PFYR…LNET) and 181–211 (NDVP…VNME). A formate dehydrogenase region spans residues 252–984 (MRKERIKKTK…YVFPGNQVDK (733 aa)). Residues 257–313 (IKKTKTVCTYCGVGCSFEVWTKDREILKVQPSHDSPANKIATCVKGKFSWGHINSDQ) form the 4Fe-4S Mo/W bis-MGD-type domain.

The protein in the C-terminal section; belongs to the prokaryotic molybdopterin-containing oxidoreductase family. [2Fe-2S] cluster serves as cofactor. It depends on [4Fe-4S] cluster as a cofactor. Requires Mo-bis(molybdopterin guanine dinucleotide) as cofactor.

The catalysed reaction is formate + NAD(+) = CO2 + NADH. This Staphylococcus aureus (strain MRSA252) protein is Putative formate dehydrogenase SAR2393.